Here is a 244-residue protein sequence, read N- to C-terminus: MGCRDVHAATVLSFLCGIASVAGLFAGTLLPNWRKLRLITFNRNEKNLTIYTGLWVKCARYDGSSDCLMYDRTWYLSVDQLDLRVLQFALPLSIVIAMGALLLCLIGMCNTAFNSSVPNIKLAKCLVNSAGCHLVAGLLFFLAGTVSLSPSIWAIFYNSHLNRKFEPVFTFDYAVFVTIASSGGLFMTALLLFVWYCACKSLSSPFWQPLYSHAPGMHTYSQPYSSRSRLSAIEIDIPVVSHST.

Topologically, residues 1–10 (MGCRDVHAAT) are cytoplasmic. The helical transmembrane segment at 11–31 (VLSFLCGIASVAGLFAGTLLP) threads the bilayer. Over 32–87 (NWRKLRLITFNRNEKNLTIYTGLWVKCARYDGSSDCLMYDRTWYLSVDQLDLRVLQ) the chain is Extracellular. Residues 88–108 (FALPLSIVIAMGALLLCLIGM) form a helical membrane-spanning segment. Residues 109-135 (CNTAFNSSVPNIKLAKCLVNSAGCHLV) lie on the Cytoplasmic side of the membrane. A helical membrane pass occupies residues 136–156 (AGLLFFLAGTVSLSPSIWAIF). At 157–174 (YNSHLNRKFEPVFTFDYA) the chain is on the extracellular side. A helical membrane pass occupies residues 175-195 (VFVTIASSGGLFMTALLLFVW). Over 196-244 (YCACKSLSSPFWQPLYSHAPGMHTYSQPYSSRSRLSAIEIDIPVVSHST) the chain is Cytoplasmic. Ser228 and Ser231 each carry phosphoserine.

It belongs to the claudin family. In terms of assembly, interacts with OCLN.

The protein localises to the cell junction. It is found in the tight junction. Its subcellular location is the cell membrane. Functionally, plays a major role in tight junction-specific obliteration of the intercellular space, through calcium-independent cell-adhesion activity. The polypeptide is Claudin-12 (Cldn12) (Mus musculus (Mouse)).